A 295-amino-acid chain; its full sequence is Acetylglutamate kinase (295 aa).

Substrate is bound by residues 64–65 (GG), R86, and N179.

This sequence belongs to the acetylglutamate kinase family. ArgB subfamily.

Its subcellular location is the cytoplasm. The enzyme catalyses N-acetyl-L-glutamate + ATP = N-acetyl-L-glutamyl 5-phosphate + ADP. Its pathway is amino-acid biosynthesis; L-arginine biosynthesis; N(2)-acetyl-L-ornithine from L-glutamate: step 2/4. Its function is as follows. Catalyzes the ATP-dependent phosphorylation of N-acetyl-L-glutamate. This Thermosynechococcus vestitus (strain NIES-2133 / IAM M-273 / BP-1) protein is Acetylglutamate kinase.